The chain runs to 262 residues: Sulfur carrier protein FdhD (262 aa).

The active-site Cysteine persulfide intermediate is cysteine 107.

It belongs to the FdhD family.

It localises to the cytoplasm. In terms of biological role, required for formate dehydrogenase (FDH) activity. Acts as a sulfur carrier protein that transfers sulfur from IscS to the molybdenum cofactor prior to its insertion into FDH. The protein is Sulfur carrier protein FdhD of Bacillus subtilis (strain 168).